The sequence spans 233 residues: 5'-methylthioadenosine/S-adenosylhomocysteine nucleosidase (233 aa).

Catalysis depends on glutamate 12, which acts as the Proton acceptor. Substrate contacts are provided by residues glycine 78, isoleucine 156, and 177 to 178 (ME). Aspartate 201 functions as the Proton donor in the catalytic mechanism.

It belongs to the PNP/UDP phosphorylase family. MtnN subfamily.

It carries out the reaction S-adenosyl-L-homocysteine + H2O = S-(5-deoxy-D-ribos-5-yl)-L-homocysteine + adenine. The enzyme catalyses S-methyl-5'-thioadenosine + H2O = 5-(methylsulfanyl)-D-ribose + adenine. It catalyses the reaction 5'-deoxyadenosine + H2O = 5-deoxy-D-ribose + adenine. The protein operates within amino-acid biosynthesis; L-methionine biosynthesis via salvage pathway; S-methyl-5-thio-alpha-D-ribose 1-phosphate from S-methyl-5'-thioadenosine (hydrolase route): step 1/2. Its function is as follows. Catalyzes the irreversible cleavage of the glycosidic bond in both 5'-methylthioadenosine (MTA) and S-adenosylhomocysteine (SAH/AdoHcy) to adenine and the corresponding thioribose, 5'-methylthioribose and S-ribosylhomocysteine, respectively. Also cleaves 5'-deoxyadenosine, a toxic by-product of radical S-adenosylmethionine (SAM) enzymes, into 5-deoxyribose and adenine. This is 5'-methylthioadenosine/S-adenosylhomocysteine nucleosidase from Listeria monocytogenes serotype 4a (strain HCC23).